A 340-amino-acid polypeptide reads, in one-letter code: tRNA N6-adenosine threonylcarbamoyltransferase (340 aa).

Residues His109 and His113 each contribute to the Fe cation site. Residues 132 to 136 (AISGA), Asp165, Gly178, and Asn277 each bind substrate. Fe cation is bound at residue Asp302.

The protein belongs to the KAE1 / TsaD family. Fe(2+) is required as a cofactor.

Its subcellular location is the cytoplasm. The catalysed reaction is L-threonylcarbamoyladenylate + adenosine(37) in tRNA = N(6)-L-threonylcarbamoyladenosine(37) in tRNA + AMP + H(+). Its function is as follows. Required for the formation of a threonylcarbamoyl group on adenosine at position 37 (t(6)A37) in tRNAs that read codons beginning with adenine. Is involved in the transfer of the threonylcarbamoyl moiety of threonylcarbamoyl-AMP (TC-AMP) to the N6 group of A37, together with TsaE and TsaB. TsaD likely plays a direct catalytic role in this reaction. The sequence is that of tRNA N6-adenosine threonylcarbamoyltransferase from Chlamydia muridarum (strain MoPn / Nigg).